Reading from the N-terminus, the 335-residue chain is MKKIAIDAMGGDNAPQAIIEGVNRALASFKDIEIQLYGDQEKIKHYLESEERVTIIHTDEKIDSDDEPAKAIRRKKNASMVLAAKAVKEGQADAVLSAGNTGALLAAGLFVVGRIKGVDRPGLMSTLPTTNQKGFDMLDLGANAENTASHLHQYAILGSFYAKNVRGIAKPRVGLLNNGTEETKGDPLRKETYALLSQDPNIHFIGNVEARDLMSGVADVVVADGFTGNAVLKSIEGTALSIMKQLKSSIKGGGFKAKLGALLLKESLSDMKHSLDYSGAGGAVLFGLKAPVVKSHGSSDANSIYYTIKQVRTMLETNVVGQLSEAFSKETISND.

This sequence belongs to the PlsX family. As to quaternary structure, homodimer. Probably interacts with PlsY.

Its subcellular location is the cytoplasm. It catalyses the reaction a fatty acyl-[ACP] + phosphate = an acyl phosphate + holo-[ACP]. It functions in the pathway lipid metabolism; phospholipid metabolism. In terms of biological role, catalyzes the reversible formation of acyl-phosphate (acyl-PO(4)) from acyl-[acyl-carrier-protein] (acyl-ACP). This enzyme utilizes acyl-ACP as fatty acyl donor, but not acyl-CoA. The chain is Phosphate acyltransferase from Streptococcus uberis (strain ATCC BAA-854 / 0140J).